A 123-amino-acid chain; its full sequence is MQNKIQVKSVKERENALIFCAENTEIEVKELTARNHVLVDSDHLSFLYILENESSFVYVSIPHTCWEAMREAMQQDKKMFVHVNDMEIELEQLKEELEYLIRNIEGNANYGEELVSAVEKVFL.

The protein belongs to the UPF0738 family.

This chain is UPF0738 protein Bcer98_0913, found in Bacillus cytotoxicus (strain DSM 22905 / CIP 110041 / 391-98 / NVH 391-98).